We begin with the raw amino-acid sequence, 147 residues long: uncharacterized protein (147 aa).

2 consecutive transmembrane segments (helical) span residues 21–41 and 67–87; these read LMLW…IVFV and ALFG…SIPL.

It is found in the cell membrane. This is an uncharacterized protein from Ureaplasma parvum serovar 3 (strain ATCC 700970).